The primary structure comprises 479 residues: G-rich sequence factor 1 (479 aa).

The transit peptide at 1-116 directs the protein to the mitochondrion; it reads MAGTRWVLGA…AAAAGPARGY (116 aa). 2 RRM domains span residues 149-245 and 249-325; these read YLIR…PSPV and GVVR…PSRR. The residue at position 243 (S243) is a Phosphoserine. S334 is modified (phosphoserine). An RRM 3 domain is found at 400-479; sequence HFVHMRGLPF…LFLNSCPKGK (80 aa).

As to quaternary structure, monomer. Found in a complex with DDX28, DHX30, FASTKD2 and FASTKD5. Interacts with the mitochondrial RNase P complex subunit TRMT10C/MRPP1. Interacts with the 2 components of the mitochondrial degradosome complex, PNPT1 and SUPV3L1, in an RNA-dependent manner.

It localises to the mitochondrion matrix. In terms of biological role, regulator of post-transcriptional mitochondrial gene expression, required for assembly of the mitochondrial ribosome and for recruitment of mRNA and lncRNA. Binds RNAs containing the 14 base G-rich element. Preferentially binds RNAs transcribed from three contiguous genes on the light strand of mtDNA, the ND6 mRNA, and the long non-coding RNAs for MT-CYB and MT-ND5, each of which contains multiple consensus binding sequences. Involved in the degradosome-mediated decay of non-coding mitochondrial transcripts (MT-ncRNA) and tRNA-like molecules. Acts by unwinding G-quadruplex RNA structures in MT-ncRNA, thus facilitating their degradation by the degradosome. G-quadruplexes (G4) are non-canonical 4 stranded structures formed by transcripts from the light strand of mtDNA. The chain is G-rich sequence factor 1 (Grsf1) from Mus musculus (Mouse).